A 136-amino-acid polypeptide reads, in one-letter code: Translation initiation factor 5A (136 aa).

Lys-37 carries the hypusine modification.

Belongs to the eIF-5A family.

It localises to the cytoplasm. Its function is as follows. Functions by promoting the formation of the first peptide bond. This Thermococcus kodakarensis (strain ATCC BAA-918 / JCM 12380 / KOD1) (Pyrococcus kodakaraensis (strain KOD1)) protein is Translation initiation factor 5A.